The sequence spans 360 residues: Peptide chain release factor 1 (360 aa).

Gln-237 is modified (N5-methylglutamine).

It belongs to the prokaryotic/mitochondrial release factor family. Methylated by PrmC. Methylation increases the termination efficiency of RF1.

Its subcellular location is the cytoplasm. Peptide chain release factor 1 directs the termination of translation in response to the peptide chain termination codons UAG and UAA. This is Peptide chain release factor 1 from Pseudomonas putida (strain ATCC 47054 / DSM 6125 / CFBP 8728 / NCIMB 11950 / KT2440).